The sequence spans 235 residues: Pro-opiomelanocortin (235 aa).

The N-terminal stretch at 1–26 (MPRFCNSRSGALLLALLLQTSIDVWS) is a signal peptide. Phenylalanine amide is present on phenylalanine 87. Residues 88–128 (GPRNSSSAGGSAQRRAEEETAGGDGRPEPSPREGKRSYSME) form a disordered region. Positions 112–128 (GRPEPSPREGKRSYSME) are enriched in basic and acidic residues. Serine 124 is modified (N-acetylserine; in Corticotropin). Residue valine 136 is modified to Valine amide. An N-linked (GlcNAc...) asparagine glycan is attached at asparagine 152. The residue at position 154 (serine 154) is a Phosphoserine. Positions 169 to 209 (EQPDGLEQVLEPDTEKADGPYRVEHFRWGNPPKDKRYGGFM) are disordered. Positions 181-205 (DTEKADGPYRVEHFRWGNPPKDKRY) are enriched in basic and acidic residues.

It belongs to the POMC family. Specific enzymatic cleavages at paired basic residues yield the different active peptides. In terms of tissue distribution, ACTH and MSH are produced by the pituitary gland.

It is found in the secreted. Its function is as follows. Stimulates the adrenal glands to release cortisol. Functionally, anorexigenic peptide. Increases the pigmentation of skin by increasing melanin production in melanocytes. In terms of biological role, increases the pigmentation of skin by increasing melanin production in melanocytes. Endogenous orexigenic opiate. Its function is as follows. Endogenous opiate. This is Pro-opiomelanocortin (Pomc) from Rattus norvegicus (Rat).